Here is a 524-residue protein sequence, read N- to C-terminus: Alkaline phosphatase, tissue-nonspecific isozyme (524 aa).

Residues 1 to 17 form the signal peptide; the sequence is MISPFLVLAIGTCLTNS. Asp-60 serves as a coordination point for Mg(2+). Zn(2+) contacts are provided by Asp-60 and Ser-110. Residue Ser-110 is the Phosphoserine intermediate of the active site. Ser-110 is subject to Phosphoserine. Residues Cys-139 and Cys-201 are joined by a disulfide bond. Residue Asn-140 is glycosylated (N-linked (GlcNAc...) asparagine). Thr-173 is a binding site for Mg(2+). Asn-230 carries N-linked (GlcNAc...) asparagine glycosylation. Ca(2+) is bound at residue Glu-235. N-linked (GlcNAc...) asparagine glycosylation is present at Asn-271. Residues Phe-290 and Glu-291 each coordinate Ca(2+). An N-linked (GlcNAc...) asparagine glycan is attached at Asn-303. Asp-306 is a Ca(2+) binding site. Glu-332 contacts Mg(2+). Positions 337, 341, 378, and 379 each coordinate Zn(2+). Asn-430 carries N-linked (GlcNAc...) asparagine glycosylation. His-454 contacts Zn(2+). A disulfide bridge connects residues Cys-489 and Cys-497. The GPI-anchor amidated serine moiety is linked to residue Ser-501. Residues 502 to 524 constitute a propeptide, removed in mature form; sequence SAGSLAAGPLLLALALYPLSVLF.

The protein belongs to the alkaline phosphatase family. Homodimer. The cofactor is Mg(2+). Zn(2+) is required as a cofactor. It depends on Ca(2+) as a cofactor. In terms of processing, N-glycosylated.

Its subcellular location is the cell membrane. It is found in the extracellular vesicle membrane. The protein resides in the mitochondrion membrane. It localises to the mitochondrion intermembrane space. It carries out the reaction a phosphate monoester + H2O = an alcohol + phosphate. It catalyses the reaction diphosphate + H2O = 2 phosphate + H(+). The catalysed reaction is pyridoxal 5'-phosphate + H2O = pyridoxal + phosphate. The enzyme catalyses phosphoethanolamine + H2O = ethanolamine + phosphate. It carries out the reaction N-phosphocreatine + H2O = creatine + phosphate. It catalyses the reaction ATP + H2O = ADP + phosphate + H(+). The catalysed reaction is ADP + H2O = AMP + phosphate + H(+). The enzyme catalyses AMP + H2O = adenosine + phosphate. Its activity is regulated as follows. Phosphatase activity is specifically inhibited by 5-((5-chloro-2-methoxyphenyl)sulfonamido)nicotinamide (SBI-425). Functionally, alkaline phosphatase that metabolizes various phosphate compounds and plays a key role in skeletal mineralization and adaptive thermogenesis. Has broad substrate specificity and can hydrolyze a considerable variety of compounds: however, only a few substrates, such as diphosphate (inorganic pyrophosphate; PPi), pyridoxal 5'-phosphate (PLP) and N-phosphocreatine are natural substrates. Plays an essential role in skeletal and dental mineralization via its ability to hydrolyze extracellular diphosphate, a potent mineralization inhibitor, to phosphate: it thereby promotes hydroxyapatite crystal formation and increases inorganic phosphate concentration. Acts in a non-redundant manner with PHOSPHO1 in skeletal mineralization: while PHOSPHO1 mediates the initiation of hydroxyapatite crystallization in the matrix vesicles (MVs), ALPL/TNAP catalyzes the spread of hydroxyapatite crystallization in the extracellular matrix. Also promotes dephosphorylation of osteopontin (SSP1), an inhibitor of hydroxyapatite crystallization in its phosphorylated state; it is however unclear whether ALPL/TNAP mediates SSP1 dephosphorylation via a direct or indirect manner. Catalyzes dephosphorylation of PLP to pyridoxal (PL), the transportable form of vitamin B6, in order to provide a sufficient amount of PLP in the brain, an essential cofactor for enzymes catalyzing the synthesis of diverse neurotransmitters. Additionally, also able to mediate ATP degradation in a stepwise manner to adenosine, thereby regulating the availability of ligands for purinergic receptors. Also capable of dephosphorylating microbial products, such as lipopolysaccharides (LPS) as well as other phosphorylated small-molecules, such as poly-inosine:cytosine (poly I:C). Acts as a key regulator of adaptive thermogenesis as part of the futile creatine cycle: localizes to the mitochondria of thermogenic fat cells and acts by mediating hydrolysis of N-phosphocreatine to initiate a futile cycle of creatine dephosphorylation and phosphorylation. During the futile creatine cycle, creatine and N-phosphocreatine are in a futile cycle, which dissipates the high energy charge of N-phosphocreatine as heat without performing any mechanical or chemical work. This Homo sapiens (Human) protein is Alkaline phosphatase, tissue-nonspecific isozyme.